Consider the following 563-residue polypeptide: Germacrene-A synthase (563 aa).

Positions 316, 320, 460, 464, and 468 each coordinate Mg(2+). The DDXXD motif motif lies at 316-320 (DDTYD).

It belongs to the terpene synthase family. Tpsa subfamily. Mg(2+) serves as cofactor. It depends on Mn(2+) as a cofactor. As to expression, high expression in disk florets, moderate expression in ray florets and detected in leaves and stems, but not in roots.

It catalyses the reaction (2E,6E)-farnesyl diphosphate = (+)-(R)-germacrene A + diphosphate. The protein operates within secondary metabolite biosynthesis; terpenoid biosynthesis. Its function is as follows. Sesquiterpene synthase involved in germacrene A biosynthesis. May be involved in the biosynthesis of the sesquiterpene lactone matricine, one of the major active compounds of chamomile flowers. The protein is Germacrene-A synthase of Matricaria chamomilla var. recutita (German chamomile).